We begin with the raw amino-acid sequence, 601 residues long: MSDLSHIRNFAIIAHIDHGKSTLADRLIQTCGGVEARDMKEQLLDSMDLERERGITIKAQTVRLHYTAKSDGRTYQLNLMDTPGHVDFAYEVSRSLAACEGSLLVVDASQGVEAQTLANVYQAIDAGHEIIPVLNKIDLPAAEPERIKQQIEDVIGLDTSDAVGISAKTGLNIDQVLEALVLRLPPPTGDVDAPTQALLVDSWYDSYLGVVILVRVRHGVLRKGMKMLMMATGAVHPIDKVGVFTPKMLETDSLSAGEMGFVMAGIKSVADCQIGDTITDDRAPAAEALPGFKASIPVVWCGLFPVDSSDFEVLRESLAKLRLNDSSFEFQAESSAALGFGFRCGFLGLLHMEIIQERLEREFGLDLITTAPSVVYRMHMTDGTLLELHNPADMPDPVRLDFVEEPWVKATIMVPDEYLGQILALCTERRGIQMDLTYAGSRAMAVYKLPLNEIVFDFYDRLKSISRGYASFDYEVADYAESDLVKVSILVNNEPVDALAFIAHRTQADFRGRQICGRLKDLIPRHLFKVPIQAAIGGRVIARETIAAMRKDVTAKCYGGDITRKKKLLEKQKEGKKKMRQFGKVEIPQSAFINALRMSDD.

Positions 5–188 (SHIRNFAIIA…ALVLRLPPPT (184 aa)) constitute a tr-type G domain. GTP is bound by residues 17 to 22 (DHGKST) and 135 to 138 (NKID).

The protein belongs to the TRAFAC class translation factor GTPase superfamily. Classic translation factor GTPase family. LepA subfamily.

It localises to the cell inner membrane. It carries out the reaction GTP + H2O = GDP + phosphate + H(+). Its function is as follows. Required for accurate and efficient protein synthesis under certain stress conditions. May act as a fidelity factor of the translation reaction, by catalyzing a one-codon backward translocation of tRNAs on improperly translocated ribosomes. Back-translocation proceeds from a post-translocation (POST) complex to a pre-translocation (PRE) complex, thus giving elongation factor G a second chance to translocate the tRNAs correctly. Binds to ribosomes in a GTP-dependent manner. This is Elongation factor 4 from Rhodospirillum rubrum (strain ATCC 11170 / ATH 1.1.1 / DSM 467 / LMG 4362 / NCIMB 8255 / S1).